Consider the following 648-residue polypeptide: MTEEIKNLQAQDYDASQIQVLEGLEAVRMRPGMYIGSTSKEGLHHLVWEIVDNSIDEALAGFASHIQVFIEPDDSITVVDDGRGIPVDIQEKTGRPAVETVFTVLHAGGKFGGGGYKVSGGLHGVGSSVVNALSTQLDVHVHKNGKIHYQEYRRGHVVADLEIVGDTDKTGTTVHFTPDPKIFTETTIFDFDKLNKRIQELAFLNRGLQISITDKRQGLEQTKHYHYEGGIASYVEYINENKDVIFDTPIYTDGEMDDITVEVAMQYTTGYHENVMSFANNIHTHEGGTHEQGFRTALTRVINDYARKNKLLKDNEDNLTGEDVREGLTAVISVKHPNPQFEGQTKTKLGNSEVVKITNRLFSEAFSDFLMENPQIAKRIVEKGILAAKARVAAKRAREVTRKKSGLEISNLPGKLADCSSNNPAETELFIVEGDSAGGSAKSGRNREFQAILPIRGKILNVEKASMDKILANEEIRSLFTAMGTGFGAEFDVSKARYQKLVLMTDADVDGAHIRTLLLTLIYRYMKPILEAGYVYIAQPPIYGVKVGSEIKEYIQPGADQEIKLQEALARYSEGRTKPTIQRYKGLGEMDDHQLWETTMDPEHRLMARVSVDDAAEADKIFDMLMGDRVEPRREFIEENAVYSTLDV.

The region spanning 427–541 (TELFIVEGDS…AGYVYIAQPP (115 aa)) is the Toprim domain. Glu433, Asp506, and Asp508 together coordinate Mg(2+).

This sequence belongs to the type II topoisomerase GyrB family. As to quaternary structure, heterotetramer, composed of two GyrA and two GyrB chains. In the heterotetramer, GyrA contains the active site tyrosine that forms a transient covalent intermediate with DNA, while GyrB binds cofactors and catalyzes ATP hydrolysis. It depends on Mg(2+) as a cofactor. The cofactor is Mn(2+). Ca(2+) is required as a cofactor.

The protein localises to the cytoplasm. It catalyses the reaction ATP-dependent breakage, passage and rejoining of double-stranded DNA.. Its function is as follows. A type II topoisomerase that negatively supercoils closed circular double-stranded (ds) DNA in an ATP-dependent manner to modulate DNA topology and maintain chromosomes in an underwound state. Negative supercoiling favors strand separation, and DNA replication, transcription, recombination and repair, all of which involve strand separation. Also able to catalyze the interconversion of other topological isomers of dsDNA rings, including catenanes and knotted rings. Type II topoisomerases break and join 2 DNA strands simultaneously in an ATP-dependent manner. The sequence is that of DNA gyrase subunit B from Streptococcus pneumoniae serotype 4 (strain ATCC BAA-334 / TIGR4).